Consider the following 51-residue polypeptide: Insulin (51 aa).

3 disulfides stabilise this stretch: cysteine 7/cysteine 37, cysteine 19/cysteine 50, and cysteine 36/cysteine 41.

It belongs to the insulin family. In terms of assembly, heterodimer of a B chain and an A chain linked by two disulfide bonds.

It is found in the secreted. Functionally, insulin decreases blood glucose concentration. It increases cell permeability to monosaccharides, amino acids and fatty acids. It accelerates glycolysis, the pentose phosphate cycle, and glycogen synthesis in liver. This chain is Insulin (INS), found in Capra hircus (Goat).